A 180-amino-acid chain; its full sequence is MDYFSESIKKAIRTVPDWPKPGVSFRDITTVLQDKTAFRKLIDAFVHRYHGQHIDAVAAVDARGFIIGSALAYELNASLVLVRKKGKLPFDTLVEDYELEYGTASVELHEDAFKPGDKVILVDDLIATGGTMLAATRLIRRIGAEIVEVAAMIDLPDLGGSRKLQEEGLQVYTVCSFEGD.

It belongs to the purine/pyrimidine phosphoribosyltransferase family. As to quaternary structure, homodimer.

The protein localises to the cytoplasm. It catalyses the reaction AMP + diphosphate = 5-phospho-alpha-D-ribose 1-diphosphate + adenine. The protein operates within purine metabolism; AMP biosynthesis via salvage pathway; AMP from adenine: step 1/1. Catalyzes a salvage reaction resulting in the formation of AMP, that is energically less costly than de novo synthesis. This Marinobacter nauticus (strain ATCC 700491 / DSM 11845 / VT8) (Marinobacter aquaeolei) protein is Adenine phosphoribosyltransferase.